The following is an 896-amino-acid chain: Histone-lysine N-methyltransferase CLF (896 aa).

Disordered stretches follow at residues 344–419 (DNLK…NRRI) and 459–514 (SGIK…DGCD). The segment covering 358–390 (GSSGQKTKSQQSESSSTARVSSESSESEVQLLS) has biased composition (low complexity). Composition is skewed to polar residues over residues 391-400 (NKSPQHSPGL), 465-476 (VVSSQCNSPSTR), and 485-498 (QMEN…AQSD). Basic and acidic residues predominate over residues 504–514 (NNEHSATDGCD). The region spanning 633-732 (RKRITERKDQ…TLGVPNQRGD (100 aa)) is the CXC domain. Residues 747–862 (QRVLLGRSDV…AGEELFYDYR (116 aa)) enclose the SET domain. Y861 lines the S-adenosyl-L-methionine pocket. A compositionally biased stretch (basic and acidic residues) spans 869–884 (PAWARKPEGPGAKDDA). Positions 869–896 (PAWARKPEGPGAKDDAQPSTGRAKKLAH) are disordered.

Belongs to the class V-like SAM-binding methyltransferase superfamily. Histone-lysine methyltransferase family. EZ subfamily. Interacts with FIE1. Component of the polycomb repressive complex 2 (PRC2), composed of the core PRC2 components FIE2, EMF2B and EZ1. PRC2 methylates 'Lys-27' residues of histone H3 (H3K27me3), leading to transcriptional repression of the affected target gene. Widely expressed. Highly expressed in young panicle.

It catalyses the reaction L-lysyl(27)-[histone H3] + 3 S-adenosyl-L-methionine = N(6),N(6),N(6)-trimethyl-L-lysyl(27)-[histone H3] + 3 S-adenosyl-L-homocysteine + 3 H(+). Functionally, polycomb group (PcG) protein. Catalytic subunit of some PcG multiprotein complex, which methylates 'Lys-27' of histone H3, leading to transcriptional repression of the affected target genes. PcG proteins act by forming multiprotein complexes, which are required to maintain the transcriptionally repressive state of homeotic genes throughout development. PcG proteins are not required to initiate repression, but to maintain it during later stages of development. Involved in the regulation of flowering. Represses flowering under long day (LD) conditions. Regulates the trimethylation on histone H3 'Lys-27' (H3K27me3) of the flowering regulators MADS14, MADS15, RFT1, EHD1, HD3A and LF. The chain is Histone-lysine N-methyltransferase CLF from Oryza sativa subsp. japonica (Rice).